Reading from the N-terminus, the 358-residue chain is F-box protein At4g35733 (358 aa).

The F-box domain maps to 4 to 51 (ATVWSDLPGELLDHIANGLFSKVELLRFRSICKTFRSAVDSDKNFLDH).

As to quaternary structure, part of a SCF (ASK-cullin-F-box) protein ligase complex.

The protein operates within protein modification; protein ubiquitination. Component of SCF(ASK-cullin-F-box) E3 ubiquitin ligase complexes, which may mediate the ubiquitination and subsequent proteasomal degradation of target proteins. This chain is F-box protein At4g35733, found in Arabidopsis thaliana (Mouse-ear cress).